The sequence spans 554 residues: Arginine--tRNA ligase (554 aa).

The 'HIGH' region motif lies at 132-142 (ANPTGPLHIGH).

Belongs to the class-I aminoacyl-tRNA synthetase family. As to quaternary structure, monomer.

Its subcellular location is the cytoplasm. The catalysed reaction is tRNA(Arg) + L-arginine + ATP = L-arginyl-tRNA(Arg) + AMP + diphosphate. This is Arginine--tRNA ligase from Pseudarthrobacter chlorophenolicus (strain ATCC 700700 / DSM 12829 / CIP 107037 / JCM 12360 / KCTC 9906 / NCIMB 13794 / A6) (Arthrobacter chlorophenolicus).